The primary structure comprises 309 residues: Uracil phosphoribosyltransferase homolog (309 aa).

The tract at residues 1-41 (MATELQCPDSMPCHNQQVNSASTPSPEQLRPGDPILDHAGG) is disordered. Residues 13–26 (CHNQQVNSASTPSP) are compositionally biased toward polar residues. Phosphoserine is present on Ser25. GTP contacts are provided by residues Arg133, Arg142, and 176–179 (EKGN). Arg186 contributes to the 5-phospho-alpha-D-ribose 1-diphosphate binding site. Positions 203 and 232 each coordinate GTP. 238 to 246 (YPILSTGNT) serves as a coordination point for 5-phospho-alpha-D-ribose 1-diphosphate. 299-301 (THF) serves as a coordination point for uracil.

Belongs to the UPRTase family.

It is found in the cytoplasm. It localises to the nucleus. This is Uracil phosphoribosyltransferase homolog (UPRT) from Macaca fascicularis (Crab-eating macaque).